Here is a 287-residue protein sequence, read N- to C-terminus: Protease HtpX (287 aa).

The next 2 membrane-spanning stretches (helical) occupy residues 4–24 and 33–53; these read IFLL…VMSI and GGLL…SLAI. Histidine 139 provides a ligand contact to Zn(2+). Glutamate 140 is an active-site residue. Histidine 143 lines the Zn(2+) pocket. The next 2 helical transmembrane spans lie at 154–174 and 195–215; these read LIQG…AGII and AVVF…VAYF. A Zn(2+)-binding site is contributed by glutamate 220.

This sequence belongs to the peptidase M48B family. Zn(2+) serves as cofactor.

It localises to the cell inner membrane. The polypeptide is Protease HtpX (Shewanella sp. (strain ANA-3)).